The following is a 341-amino-acid chain: Terpene synthase 9 (341 aa).

A DDxx(x)D/E motif motif is present at residues 81–86 (DDILDS). The NDxxSxxxD/E motif motif lies at 222–230 (NDMASYCKE).

This sequence belongs to the terpene synthase family.

The catalysed reaction is (2E,6E)-farnesyl diphosphate = (1S,2S,4R)-beta-elemene + diphosphate. It carries out the reaction (2E,6E)-farnesyl diphosphate = germacrene D + diphosphate. Its function is as follows. Terpene synthase that converts its substrate farnesyl diphosphate (FPP) into the sesquiterpenes beta-elemene, germacrene D and a yet unidentified sesquiterpene. The polypeptide is Terpene synthase 9 (Dictyostelium purpureum (Slime mold)).